Reading from the N-terminus, the 184-residue chain is ATP-dependent protease subunit HslV (184 aa).

Residue threonine 12 is part of the active site. Na(+) is bound by residues alanine 166, cysteine 169, and threonine 172.

This sequence belongs to the peptidase T1B family. HslV subfamily. In terms of assembly, a double ring-shaped homohexamer of HslV is capped on each side by a ring-shaped HslU homohexamer. The assembly of the HslU/HslV complex is dependent on binding of ATP.

It is found in the cytoplasm. It carries out the reaction ATP-dependent cleavage of peptide bonds with broad specificity.. Allosterically activated by HslU binding. In terms of biological role, protease subunit of a proteasome-like degradation complex believed to be a general protein degrading machinery. The sequence is that of ATP-dependent protease subunit HslV from Nitrobacter hamburgensis (strain DSM 10229 / NCIMB 13809 / X14).